We begin with the raw amino-acid sequence, 279 residues long: Phosphate import ATP-binding protein PstB (279 aa).

Residues 33 to 274 (LDINKLNLFY…PLKKKTEDYI (242 aa)) form the ABC transporter domain. Residue 65–72 (GPSGCGKS) coordinates ATP.

It belongs to the ABC transporter superfamily. Phosphate importer (TC 3.A.1.7) family. In terms of assembly, the complex is composed of two ATP-binding proteins (PstB), two transmembrane proteins (PstC and PstA) and a solute-binding protein (PstS).

It is found in the cell inner membrane. It carries out the reaction phosphate(out) + ATP + H2O = ADP + 2 phosphate(in) + H(+). In terms of biological role, part of the ABC transporter complex PstSACB involved in phosphate import. Responsible for energy coupling to the transport system. The sequence is that of Phosphate import ATP-binding protein PstB from Colwellia psychrerythraea (strain 34H / ATCC BAA-681) (Vibrio psychroerythus).